The primary structure comprises 149 residues: UPF0178 protein Mmwyl1_2258 (149 aa).

This sequence belongs to the UPF0178 family.

The protein is UPF0178 protein Mmwyl1_2258 of Marinomonas sp. (strain MWYL1).